A 405-amino-acid polypeptide reads, in one-letter code: Acetylornithine aminotransferase 1 (405 aa).

Residues 103–104 (GA) and phenylalanine 136 contribute to the pyridoxal 5'-phosphate site. Arginine 139 provides a ligand contact to N(2)-acetyl-L-ornithine. Position 221–224 (221–224 (DEVQ)) interacts with pyridoxal 5'-phosphate. An N6-(pyridoxal phosphate)lysine modification is found at lysine 250. Serine 278 contributes to the N(2)-acetyl-L-ornithine binding site. Threonine 279 provides a ligand contact to pyridoxal 5'-phosphate.

This sequence belongs to the class-III pyridoxal-phosphate-dependent aminotransferase family. ArgD subfamily. In terms of assembly, homodimer. Pyridoxal 5'-phosphate is required as a cofactor.

It localises to the cytoplasm. The catalysed reaction is N(2)-acetyl-L-ornithine + 2-oxoglutarate = N-acetyl-L-glutamate 5-semialdehyde + L-glutamate. Its pathway is amino-acid biosynthesis; L-arginine biosynthesis; N(2)-acetyl-L-ornithine from L-glutamate: step 4/4. The protein is Acetylornithine aminotransferase 1 of Bradyrhizobium diazoefficiens (strain JCM 10833 / BCRC 13528 / IAM 13628 / NBRC 14792 / USDA 110).